The primary structure comprises 756 residues: 5-methyltetrahydropteroyltriglutamate--homocysteine methyltransferase (756 aa).

5-methyltetrahydropteroyltri-L-glutamate-binding positions include 15 to 18 and lysine 111; that span reads REWK. Positions 392–411 are disordered; sequence GAATSHNLENKKRPQSFNER. The segment covering 399–411 has biased composition (basic and acidic residues); sequence LENKKRPQSFNER. L-homocysteine is bound by residues 429 to 431 and glutamate 482; that span reads IGS. Residues 429 to 431 and glutamate 482 each bind L-methionine; that span reads IGS. 5-methyltetrahydropteroyltri-L-glutamate-binding positions include 513–514 and tryptophan 559; that span reads RC. Aspartate 597 contributes to the L-homocysteine binding site. L-methionine is bound at residue aspartate 597. Residue glutamate 603 participates in 5-methyltetrahydropteroyltri-L-glutamate binding. Histidine 639, cysteine 641, and glutamate 663 together coordinate Zn(2+). Histidine 692 (proton donor) is an active-site residue. Position 724 (cysteine 724) interacts with Zn(2+).

This sequence belongs to the vitamin-B12 independent methionine synthase family. Zn(2+) is required as a cofactor.

It carries out the reaction 5-methyltetrahydropteroyltri-L-glutamate + L-homocysteine = tetrahydropteroyltri-L-glutamate + L-methionine. It participates in amino-acid biosynthesis; L-methionine biosynthesis via de novo pathway; L-methionine from L-homocysteine (MetE route): step 1/1. In terms of biological role, catalyzes the transfer of a methyl group from 5-methyltetrahydrofolate to homocysteine resulting in methionine formation. This is 5-methyltetrahydropteroyltriglutamate--homocysteine methyltransferase from Halalkalibacterium halodurans (strain ATCC BAA-125 / DSM 18197 / FERM 7344 / JCM 9153 / C-125) (Bacillus halodurans).